Here is a 560-residue protein sequence, read N- to C-terminus: Cytosolic purine 5'-nucleotidase (560 aa).

Aspartate 52 acts as the Nucleophile in catalysis. IMP is bound by residues aspartate 52 and aspartate 54. Mg(2+) contacts are provided by aspartate 52 and aspartate 54. Aspartate 54 functions as the Proton donor in the catalytic mechanism. Residues arginine 144 and asparagine 154 each coordinate ATP. Arginine 202, aspartate 206, lysine 215, threonine 249, asparagine 250, serine 251, and lysine 292 together coordinate IMP. Aspartate 351 provides a ligand contact to Mg(2+). Position 418 is a phosphoserine (serine 418). The ATP site is built by glutamine 453 and arginine 456. Residues serine 502, serine 511, and serine 527 each carry the phosphoserine modification. The segment at 541 to 560 (PQEITHCHDEDDDEEEEEEE) is disordered. Residues 548 to 560 (HDEDDDEEEEEEE) are required for tetramer assembly. Positions 550–560 (EDDDEEEEEEE) are enriched in acidic residues.

The protein belongs to the 5'(3')-deoxyribonucleotidase family. In terms of assembly, homotetramer. The cofactor is Mg(2+).

It is found in the cytoplasm. The protein resides in the cytosol. It catalyses the reaction a ribonucleoside 5'-phosphate + H2O = a ribonucleoside + phosphate. It carries out the reaction a 2'-deoxyribonucleoside + a ribonucleoside 5'-phosphate = a ribonucleoside + a 2'-deoxyribonucleoside 5'-phosphate. The enzyme catalyses IMP + H2O = inosine + phosphate. The catalysed reaction is GMP + H2O = guanosine + phosphate. It catalyses the reaction dIMP + H2O = 2'-deoxyinosine + phosphate. It carries out the reaction dGMP + H2O = 2'-deoxyguanosine + phosphate. The enzyme catalyses XMP + H2O = xanthosine + phosphate. The catalysed reaction is inosine + GMP = guanosine + IMP. It catalyses the reaction dGMP + inosine = 2'-deoxyguanosine + IMP. It carries out the reaction dIMP + inosine = 2'-deoxyinosine + IMP. The enzyme catalyses inosine + UMP = uridine + IMP. The catalysed reaction is inosine + CMP = cytidine + IMP. It catalyses the reaction inosine + AMP = IMP + adenosine. Its activity is regulated as follows. Allosterically activated by various compounds including ATP, 2,3-BPG/2,3-Bisphosphoglyceric acid and Ap4A/P1,P4-bis(5'-adenosyl) tetraphosphate. Binding of an allosteric activator is a prerequisiste to magnesium and substrate binding. Inhibited by inorganic phosphate. Its function is as follows. Broad specificity cytosolic 5'-nucleotidase that catalyzes the dephosphorylation of 6-hydroxypurine nucleoside 5'-monophosphates. In addition, possesses a phosphotransferase activity by which it can transfer a phosphate from a donor nucleoside monophosphate to an acceptor nucleoside, preferably inosine, deoxyinosine and guanosine. Has the highest activities for IMP and GMP followed by dIMP, dGMP and XMP. Could also catalyze the transfer of phosphates from pyrimidine monophosphates but with lower efficiency. Through these activities regulates the purine nucleoside/nucleotide pools within the cell. This Bos taurus (Bovine) protein is Cytosolic purine 5'-nucleotidase.